The primary structure comprises 154 residues: Interleukin-2 (154 aa).

The N-terminal stretch at 1–20 (MYKMQLLSCIALTLALVANG) is a signal peptide. Threonine 23 carries an O-linked (GalNAc...) threonine glycan. Cysteines 78 and 126 form a disulfide.

It belongs to the IL-2 family.

Its subcellular location is the secreted. Its function is as follows. Cytokine produced by activated CD4-positive helper T-cells and to a lesser extend activated CD8-positive T-cells and natural killer (NK) cells that plays pivotal roles in the immune response and tolerance. Binds to a receptor complex composed of either the high-affinity trimeric IL-2R (IL2RA/CD25, IL2RB/CD122 and IL2RG/CD132) or the low-affinity dimeric IL-2R (IL2RB and IL2RG). Interaction with the receptor leads to oligomerization and conformation changes in the IL-2R subunits resulting in downstream signaling starting with phosphorylation of JAK1 and JAK3. In turn, JAK1 and JAK3 phosphorylate the receptor to form a docking site leading to the phosphorylation of several substrates including STAT5. This process leads to activation of several pathways including STAT, phosphoinositide-3-kinase/PI3K and mitogen-activated protein kinase/MAPK pathways. Functions as a T-cell growth factor and can increase NK-cell cytolytic activity as well. Promotes strong proliferation of activated B-cells and subsequently immunoglobulin production. Plays a pivotal role in regulating the adaptive immune system by controlling the survival and proliferation of regulatory T-cells, which are required for the maintenance of immune tolerance. Moreover, participates in the differentiation and homeostasis of effector T-cell subsets, including Th1, Th2, Th17 as well as memory CD8-positive T-cells. The polypeptide is Interleukin-2 (IL2) (Delphinapterus leucas (Beluga whale)).